Here is a 157-residue protein sequence, read N- to C-terminus: Small ribosomal subunit protein uS7 (157 aa).

This sequence belongs to the universal ribosomal protein uS7 family. Part of the 30S ribosomal subunit. Contacts proteins S9 and S11.

Its function is as follows. One of the primary rRNA binding proteins, it binds directly to 16S rRNA where it nucleates assembly of the head domain of the 30S subunit. Is located at the subunit interface close to the decoding center, probably blocks exit of the E-site tRNA. This chain is Small ribosomal subunit protein uS7, found in Francisella tularensis subsp. holarctica (strain OSU18).